Reading from the N-terminus, the 79-residue chain is D-alanyl carrier protein (79 aa).

A Carrier domain is found at 1-76; the sequence is MKEQIFDIIE…KIAARVQEKT (76 aa). Serine 34 bears the O-(pantetheine 4'-phosphoryl)serine mark.

Belongs to the DltC family. In terms of processing, 4'-phosphopantetheine is transferred from CoA to a specific serine of apo-DCP.

It localises to the cytoplasm. It functions in the pathway cell wall biogenesis; lipoteichoic acid biosynthesis. Carrier protein involved in the D-alanylation of lipoteichoic acid (LTA). The loading of thioester-linked D-alanine onto DltC is catalyzed by D-alanine--D-alanyl carrier protein ligase DltA. The DltC-carried D-alanyl group is further transferred to cell membrane phosphatidylglycerol (PG) by forming an ester bond, probably catalyzed by DltD. D-alanylation of LTA plays an important role in modulating the properties of the cell wall in Gram-positive bacteria, influencing the net charge of the cell wall. The protein is D-alanyl carrier protein of Lactococcus lactis subsp. cremoris (strain SK11).